The sequence spans 524 residues: L-lactate permease (524 aa).

13 consecutive transmembrane segments (helical) span residues 12–34 (LAVSAFVAAIPILLLLLCLTVFK), 38–60 (IQAALLTLLVTFFIAGLVFHLPF), 67–89 (IVQGVVQGLWPIGYIIVMAVWLY), 127–149 (LEGAAGFGVPIAICAVLLVSLGF), 156–178 (MLCLIANGASGAFGAIGIPVGII), 193–215 (SMMTALTLPMINFTIPFLLIWLM), 224–246 (ILPAILVTSSVYTVSQALITIFI), 250–267 (LADIIPSLLTMGLLALFL), 297–319 (WSPFYLLTMFVFLWSLPAFKGLL), 339–361 (IEVGVDFIGATGTAILLAAVTTV), 374–396 (SLLKKVIVDFSIPIMMICAIIGI), 411–433 (EAVATTGAFFPFLSPILGWIGVF), and 505–522 (YSFGLLVFVSVWTYILSL).

Belongs to the lactate permease family.

Its subcellular location is the cell membrane. In terms of biological role, may play a role in L-lactate transport. In Halalkalibacterium halodurans (strain ATCC BAA-125 / DSM 18197 / FERM 7344 / JCM 9153 / C-125) (Bacillus halodurans), this protein is L-lactate permease (lctP).